The sequence spans 321 residues: Histidine N-alpha-methyltransferase (321 aa).

An L-histidine-binding site is contributed by tyrosine 56. S-adenosyl-L-methionine is bound by residues glycine 86, lysine 92, aspartate 113, and 141–142 (DF). L-histidine contacts are provided by residues asparagine 166, tyrosine 206, and 282-284 (EVS).

Belongs to the methyltransferase superfamily. EgtD family. In terms of assembly, monomer.

It carries out the reaction L-histidine + 3 S-adenosyl-L-methionine = hercynine + 3 S-adenosyl-L-homocysteine + 3 H(+). The protein operates within amino-acid biosynthesis; ergothioneine biosynthesis. Its function is as follows. Catalyzes the SAM-dependent triple methylation of the alpha-amino group of histidine to form hercynine, a step in the biosynthesis pathway of ergothioneine. Among all the proteinogenic amino acids, only L-histidine is a substrate. The chain is Histidine N-alpha-methyltransferase from Mycolicibacterium smegmatis (strain ATCC 700084 / mc(2)155) (Mycobacterium smegmatis).